The sequence spans 484 residues: Aspartyl/glutamyl-tRNA(Asn/Gln) amidotransferase subunit B (484 aa).

It belongs to the GatB/GatE family. GatB subfamily. Heterotrimer of A, B and C subunits.

The catalysed reaction is L-glutamyl-tRNA(Gln) + L-glutamine + ATP + H2O = L-glutaminyl-tRNA(Gln) + L-glutamate + ADP + phosphate + H(+). It carries out the reaction L-aspartyl-tRNA(Asn) + L-glutamine + ATP + H2O = L-asparaginyl-tRNA(Asn) + L-glutamate + ADP + phosphate + 2 H(+). Its function is as follows. Allows the formation of correctly charged Asn-tRNA(Asn) or Gln-tRNA(Gln) through the transamidation of misacylated Asp-tRNA(Asn) or Glu-tRNA(Gln) in organisms which lack either or both of asparaginyl-tRNA or glutaminyl-tRNA synthetases. The reaction takes place in the presence of glutamine and ATP through an activated phospho-Asp-tRNA(Asn) or phospho-Glu-tRNA(Gln). This is Aspartyl/glutamyl-tRNA(Asn/Gln) amidotransferase subunit B from Anaeromyxobacter dehalogenans (strain 2CP-C).